The chain runs to 1079 residues: DNA-directed RNA polymerase subunit beta (1079 aa).

Residues R963 to R982 are disordered. Polar residues predominate over residues G966–P975.

The protein belongs to the RNA polymerase beta chain family. In plastids the minimal PEP RNA polymerase catalytic core is composed of four subunits: alpha, beta, beta', and beta''. When a (nuclear-encoded) sigma factor is associated with the core the holoenzyme is formed, which can initiate transcription.

It localises to the plastid. It is found in the chloroplast. The catalysed reaction is RNA(n) + a ribonucleoside 5'-triphosphate = RNA(n+1) + diphosphate. Functionally, DNA-dependent RNA polymerase catalyzes the transcription of DNA into RNA using the four ribonucleoside triphosphates as substrates. The chain is DNA-directed RNA polymerase subunit beta from Pelargonium hortorum (Common geranium).